The following is a 298-amino-acid chain: Mimecan (298 aa).

The first 20 residues, 1–20, serve as a signal peptide directing secretion; it reads MKTLQSTLLLLLLVPLIKPA. An O-linked (GalNAc...) threonine glycan is attached at threonine 80. N-linked (GlcNAc...) (keratan sulfate) asparagine glycosylation occurs at asparagine 88. LRR repeat units follow at residues 112-131, 132-155, 156-179, 180-199, 200-225, 226-246, and 247-277; these read DAVP…FNKI, KKLT…GNLI, EDIE…ENQL, LKLP…YNKI, KSRG…HNAL, ESVP…FNNI, and ASIT…GNPI. N-linked (GlcNAc...) (keratan sulfate) asparagine glycosylation is present at asparagine 214. A disulfide bond links cysteine 255 and cysteine 288. An N-linked (GlcNAc...) (keratan sulfate) asparagine glycan is attached at asparagine 258.

This sequence belongs to the small leucine-rich proteoglycan (SLRP) family. SLRP class III subfamily. O-glycosylated with a core 1 or possibly core 8 glycan. Post-translationally, contains keratan sulfate. Bone.

The protein resides in the secreted. The protein localises to the extracellular space. It is found in the extracellular matrix. Induces bone formation in conjunction with TGF-beta-1 or TGF-beta-2. This Homo sapiens (Human) protein is Mimecan (OGN).